The chain runs to 237 residues: Listeriolysin regulatory protein (237 aa).

The HTH crp-type domain occupies 137 to 212 (NGKLGSICGQ…NSCFYVQNLD (76 aa)).

In terms of biological role, positively regulates expression of listeriolysin, of 1-phosphadidylinositol phosphodiesterase (PI-PLC) and other virulence factors. The sequence is that of Listeriolysin regulatory protein (prfA) from Listeria monocytogenes serovar 1/2a (strain ATCC BAA-679 / EGD-e).